A 333-amino-acid chain; its full sequence is Flotillin-like protein FloA (333 aa).

The helical transmembrane segment at 10–30 (IFLIAGGIIFLVLFFHYVPFF) threads the bilayer.

This sequence belongs to the flotillin-like FloA family. As to quaternary structure, homooligomerizes.

The protein localises to the cell membrane. The protein resides in the membrane raft. Functionally, found in functional membrane microdomains (FMM) that may be equivalent to eukaryotic membrane rafts. FMMs are highly dynamic and increase in number as cells age. Flotillins are thought to be important factors in membrane fluidity. In Bacteroides fragilis (strain ATCC 25285 / DSM 2151 / CCUG 4856 / JCM 11019 / LMG 10263 / NCTC 9343 / Onslow / VPI 2553 / EN-2), this protein is Flotillin-like protein FloA.